The chain runs to 276 residues: Protein MoxJ (276 aa).

The N-terminal stretch at methionine 1–alanine 24 is a signal peptide.

It localises to the periplasm. Its function is as follows. May be involved in the assemblage of active methanol dehydrogenase and/or its cofactor PQQ in the periplasm. This is Protein MoxJ (moxJ) from Paracoccus denitrificans.